The primary structure comprises 458 residues: Forkhead box protein J1-A (458 aa).

Over residues 68-78 the composition is skewed to polar residues; the sequence is TGQHTSPSSHS. Residues 68 to 99 form a disordered region; that stretch reads TGQHTSPSSHSHLMGSDAPSSPLAGDPASIGM. The segment at residues 142–236 is a DNA-binding region (fork-head); the sequence is KPPYSYATLI…LNGAYKKRRL (95 aa). The segment covering 305-321 has biased composition (basic residues); it reads TNKRKQPYNHRTGKTPR. The interval 305 to 324 is disordered; that stretch reads TNKRKQPYNHRTGKTPRRSS.

It belongs to the FOXJ1 family. As to expression, expressed in floor plate, dorsal forerunner cells, Kupffers vesicle, the floor plate, pronephric ducts and kidney.

Its subcellular location is the nucleus. Functionally, key transcription factor required for motile ciliogenesis. Activates genes essential for motile cilia formation and function. Its activity is sufficient for ectopic development of cilia that resemble motile cilia. The chain is Forkhead box protein J1-A from Danio rerio (Zebrafish).